The chain runs to 650 residues: Acetyl-coenzyme A synthetase (650 aa).

CoA contacts are provided by residues 191–194 (RGGR), T311, and N335. Residues 387–389 (GEP), 411–416 (DTWWQT), D501, and R516 each bind ATP. S524 contacts CoA. ATP is bound at residue R527. V538, H540, and I543 together coordinate Mg(2+). A CoA-binding site is contributed by R585. K610 carries the N6-acetyllysine modification.

Belongs to the ATP-dependent AMP-binding enzyme family. It depends on Mg(2+) as a cofactor. Post-translationally, acetylated. Deacetylation by the SIR2-homolog deacetylase activates the enzyme.

It carries out the reaction acetate + ATP + CoA = acetyl-CoA + AMP + diphosphate. Catalyzes the conversion of acetate into acetyl-CoA (AcCoA), an essential intermediate at the junction of anabolic and catabolic pathways. AcsA undergoes a two-step reaction. In the first half reaction, AcsA combines acetate with ATP to form acetyl-adenylate (AcAMP) intermediate. In the second half reaction, it can then transfer the acetyl group from AcAMP to the sulfhydryl group of CoA, forming the product AcCoA. The polypeptide is Acetyl-coenzyme A synthetase (Vibrio vulnificus (strain YJ016)).